Consider the following 316-residue polypeptide: Olfactory receptor 10H3 (316 aa).

Over 1–25 (MPGQNYRTISEFILSGFSAFPQQLL) the chain is Extracellular. The helical transmembrane segment at 26 to 46 (PVLFLLYLLMFLFTLLGNLLI) threads the bilayer. The Cytoplasmic portion of the chain corresponds to 47–54 (MATVWIER). A helical membrane pass occupies residues 55–75 (RLHTPMYLFLCALSISEILFT). Residues 76–99 (VAITPRMLADLLFTHRSITFVACA) lie on the Extracellular side of the membrane. A disulfide bridge connects residues cysteine 98 and cysteine 190. Residues 100–120 (IQMFFSFMFGFTHSFLLMVMG) form a helical membrane-spanning segment. The Cytoplasmic segment spans residues 121–139 (YDHYVTICHPLHYNMLMSP). A helical transmembrane segment spans residues 140–160 (RGCAHLVAWTWAGGSVMGMMV). The Extracellular segment spans residues 161–197 (TMMVFHLTFCGSNVIHHFLCHVLSLLKLACGSKTSSV). The helical transmembrane segment at 198–218 (IMGVMLVCVTALIGCLFLIIL) threads the bilayer. The Cytoplasmic portion of the chain corresponds to 219-238 (SFVFIVAAILRIPSAEGRHK). A helical transmembrane segment spans residues 239–259 (TFSTCVSHLTVVVMHYSFASL). At 260-272 (IYLKPKGLHSMYS) the chain is on the extracellular side. The helical transmembrane segment at 273–293 (DALMATTYTVFTPFLSPIIFS) threads the bilayer. The Cytoplasmic portion of the chain corresponds to 294-316 (LRNKELKNAINKNFCRRFCPLSS).

This sequence belongs to the G-protein coupled receptor 1 family.

It is found in the cell membrane. Odorant receptor. The polypeptide is Olfactory receptor 10H3 (OR10H3) (Homo sapiens (Human)).